The chain runs to 175 residues: Phosphopantetheine adenylyltransferase (175 aa).

Ser10 is a binding site for substrate. ATP-binding positions include 10–11 and His18; that span reads SF. The substrate site is built by Lys42, Leu74, and Arg88. Residues 89-91, Glu99, and 124-130 contribute to the ATP site; these read GMR and WIFTSSS.

Belongs to the bacterial CoaD family. Homohexamer. Mg(2+) serves as cofactor.

The protein localises to the cytoplasm. It carries out the reaction (R)-4'-phosphopantetheine + ATP + H(+) = 3'-dephospho-CoA + diphosphate. It participates in cofactor biosynthesis; coenzyme A biosynthesis; CoA from (R)-pantothenate: step 4/5. Functionally, reversibly transfers an adenylyl group from ATP to 4'-phosphopantetheine, yielding dephospho-CoA (dPCoA) and pyrophosphate. This chain is Phosphopantetheine adenylyltransferase, found in Desulfatibacillum aliphaticivorans.